The following is a 162-amino-acid chain: uncharacterized protein (162 aa).

Residues 1–18 (MRKTFLTLLCVSSAIAHA) form the signal peptide.

This sequence belongs to the fimbrial protein family.

Functionally, part of the yfcOPQRSUV fimbrial operon. Could contribute to adhesion to various surfaces in specific environmental niches. Increases adhesion to eukaryotic T24 bladder epithelial cells in the absence of fim genes. This is an uncharacterized protein from Escherichia coli (strain K12).